We begin with the raw amino-acid sequence, 89 residues long: Small ribosomal subunit protein bS20 (89 aa).

It belongs to the bacterial ribosomal protein bS20 family.

Binds directly to 16S ribosomal RNA. This is Small ribosomal subunit protein bS20 from Wolbachia pipientis subsp. Culex pipiens (strain wPip).